The primary structure comprises 805 residues: Phenylalanine--tRNA ligase beta subunit (805 aa).

The 110-residue stretch at 39–148 (APPFTGVVVA…AALRPGTDIR (110 aa)) folds into the tRNA-binding domain. A B5 domain is found at 399 to 474 (PVREPVRMRL…RVYGFERIPD (76 aa)). Residues D452, D458, E461, and E462 each contribute to the Mg(2+) site. The FDX-ACB domain occupies 703–804 (SRQPAVVRDL…LVAAHNARQR (102 aa)).

This sequence belongs to the phenylalanyl-tRNA synthetase beta subunit family. Type 1 subfamily. Tetramer of two alpha and two beta subunits. Mg(2+) serves as cofactor.

Its subcellular location is the cytoplasm. The catalysed reaction is tRNA(Phe) + L-phenylalanine + ATP = L-phenylalanyl-tRNA(Phe) + AMP + diphosphate + H(+). This Bordetella parapertussis (strain 12822 / ATCC BAA-587 / NCTC 13253) protein is Phenylalanine--tRNA ligase beta subunit.